Consider the following 194-residue polypeptide: Probable nicotinate-nucleotide adenylyltransferase (194 aa).

This sequence belongs to the NadD family.

The catalysed reaction is nicotinate beta-D-ribonucleotide + ATP + H(+) = deamido-NAD(+) + diphosphate. The protein operates within cofactor biosynthesis; NAD(+) biosynthesis; deamido-NAD(+) from nicotinate D-ribonucleotide: step 1/1. Functionally, catalyzes the reversible adenylation of nicotinate mononucleotide (NaMN) to nicotinic acid adenine dinucleotide (NaAD). The sequence is that of Probable nicotinate-nucleotide adenylyltransferase from Christiangramia forsetii (strain DSM 17595 / CGMCC 1.15422 / KT0803) (Gramella forsetii).